A 763-amino-acid polypeptide reads, in one-letter code: Phosphoglycerol transferase I (763 aa).

The next 4 helical transmembrane spans lie at 1–21 (MSELLSFALFLASVLIYAWKA), 26–46 (WWFAATLTVLGLFVVLNITLF), 77–97 (ILPGIGIVLGLTAVFGALGWI), and 108–128 (FGYSLLALLLALGSVDASPAF).

Belongs to the OpgB family.

The protein localises to the cell inner membrane. The enzyme catalyses a phosphatidylglycerol + a membrane-derived-oligosaccharide D-glucose = a 1,2-diacyl-sn-glycerol + a membrane-derived-oligosaccharide 6-(glycerophospho)-D-glucose.. It functions in the pathway glycan metabolism; osmoregulated periplasmic glucan (OPG) biosynthesis. Its function is as follows. Transfers a phosphoglycerol residue from phosphatidylglycerol to the membrane-bound nascent glucan backbones. The chain is Phosphoglycerol transferase I from Escherichia coli (strain ATCC 8739 / DSM 1576 / NBRC 3972 / NCIMB 8545 / WDCM 00012 / Crooks).